A 109-amino-acid chain; its full sequence is Iron-sulfur cluster assembly protein CyaY (109 aa).

The protein belongs to the frataxin family.

Its function is as follows. Involved in iron-sulfur (Fe-S) cluster assembly. May act as a regulator of Fe-S biogenesis. This Shewanella baltica (strain OS155 / ATCC BAA-1091) protein is Iron-sulfur cluster assembly protein CyaY.